The primary structure comprises 166 residues: Regulatory protein RecX (166 aa).

This sequence belongs to the RecX family.

The protein resides in the cytoplasm. Its function is as follows. Modulates RecA activity. In Salmonella choleraesuis (strain SC-B67), this protein is Regulatory protein RecX.